Reading from the N-terminus, the 236-residue chain is LexA repressor (236 aa).

Residues phenylalanine 26 to isoleucine 46 constitute a DNA-binding region (H-T-H motif). Active-site for autocatalytic cleavage activity residues include serine 157 and lysine 195.

It belongs to the peptidase S24 family. As to quaternary structure, homodimer.

It carries out the reaction Hydrolysis of Ala-|-Gly bond in repressor LexA.. In terms of biological role, represses a number of genes involved in the response to DNA damage (SOS response), including recA and lexA. In the presence of single-stranded DNA, RecA interacts with LexA causing an autocatalytic cleavage which disrupts the DNA-binding part of LexA, leading to derepression of the SOS regulon and eventually DNA repair. In Methylocella silvestris (strain DSM 15510 / CIP 108128 / LMG 27833 / NCIMB 13906 / BL2), this protein is LexA repressor.